The sequence spans 123 residues: MFKRSEKVAEAVHELVSELLVKGLKDPRIGFVTITGVKVTDDMHLATIYFTVIGSDEEKKATEQGLNSARGFIRKEMGKSFRMRYVPDIVFKYDASVEYGSRIESILKEIGSPEHDDNDKENS.

Belongs to the RbfA family. As to quaternary structure, monomer. Binds 30S ribosomal subunits, but not 50S ribosomal subunits or 70S ribosomes.

It localises to the cytoplasm. One of several proteins that assist in the late maturation steps of the functional core of the 30S ribosomal subunit. Associates with free 30S ribosomal subunits (but not with 30S subunits that are part of 70S ribosomes or polysomes). Required for efficient processing of 16S rRNA. May interact with the 5'-terminal helix region of 16S rRNA. The sequence is that of Ribosome-binding factor A from Geotalea daltonii (strain DSM 22248 / JCM 15807 / FRC-32) (Geobacter daltonii).